The sequence spans 190 residues: Peptidyl-tRNA hydrolase (190 aa).

Tyr14 is a tRNA binding site. Residue His19 is the Proton acceptor of the active site. TRNA is bound by residues Tyr64, Asn66, and Asn112.

It belongs to the PTH family. Monomer.

The protein resides in the cytoplasm. The enzyme catalyses an N-acyl-L-alpha-aminoacyl-tRNA + H2O = an N-acyl-L-amino acid + a tRNA + H(+). Functionally, hydrolyzes ribosome-free peptidyl-tRNAs (with 1 or more amino acids incorporated), which drop off the ribosome during protein synthesis, or as a result of ribosome stalling. Its function is as follows. Catalyzes the release of premature peptidyl moieties from peptidyl-tRNA molecules trapped in stalled 50S ribosomal subunits, and thus maintains levels of free tRNAs and 50S ribosomes. The protein is Peptidyl-tRNA hydrolase of Chlorobium chlorochromatii (strain CaD3).